A 140-amino-acid chain; its full sequence is Lysozyme D (140 aa).

Positions 1 to 18 (MKAFIVLVALACAAPAFG) are cleaved as a signal peptide. The 122-residue stretch at 19-140 (RTMDRCSLAR…GWLPSIDDCF (122 aa)) folds into the C-type lysozyme domain. Cystine bridges form between cysteine 24–cysteine 139, cysteine 45–cysteine 129, cysteine 80–cysteine 96, and cysteine 92–cysteine 110. Residues glutamate 50 and aspartate 68 contribute to the active site.

The protein belongs to the glycosyl hydrolase 22 family. As to expression, found in the midgut.

The catalysed reaction is Hydrolysis of (1-&gt;4)-beta-linkages between N-acetylmuramic acid and N-acetyl-D-glucosamine residues in a peptidoglycan and between N-acetyl-D-glucosamine residues in chitodextrins.. Its function is as follows. Unlikely to play an active role in the humoral immune defense. May have a function in the digestion of bacteria in the food. This chain is Lysozyme D (LysD), found in Drosophila melanogaster (Fruit fly).